The primary structure comprises 221 residues: CASP-like protein 4B1 (221 aa).

The interval 1 to 78 is disordered; sequence MAMQLHAASP…HDHHGGGGGG (78 aa). The Cytoplasmic portion of the chain corresponds to 1-87; it reads MAMQLHAASP…GDEATQLLNG (87 aa). A compositionally biased stretch (pro residues) spans 19-33; sequence SPPPPPPLSPHPEPA. The span at 50 to 62 shows a compositional bias: low complexity; sequence APVATATTPLTPG. The helical transmembrane segment at 88 to 108 threads the bilayer; that stretch reads IVLVLRAGAALLSFVAMALVA. Residues 109–125 are Extracellular-facing; that stretch reads SCRHGDWMDFLRYQEYR. A helical membrane pass occupies residues 126–146; that stretch reads YLLGVSVVAFVYSAAQALKNF. Residues 147-160 are Cytoplasmic-facing; that stretch reads RRRRRGAADASFLD. The helical transmembrane segment at 161-181 threads the bilayer; the sequence is FAGDQAVAYLLVTASAAALPI. Residues 182-196 are Extracellular-facing; that stretch reads TIRMRSAVVNVFTDA. The helical transmembrane segment at 197–217 threads the bilayer; sequence IAASIALGFLAFAALALSAML. The Cytoplasmic portion of the chain corresponds to 218–221; it reads SRHA.

This sequence belongs to the Casparian strip membrane proteins (CASP) family. Homodimer and heterodimers.

The protein localises to the cell membrane. In Hordeum vulgare subsp. vulgare (Domesticated barley), this protein is CASP-like protein 4B1.